Reading from the N-terminus, the 250-residue chain is Pyrroloquinoline-quinone synthase (250 aa).

The protein belongs to the PqqC family.

The enzyme catalyses 6-(2-amino-2-carboxyethyl)-7,8-dioxo-1,2,3,4,7,8-hexahydroquinoline-2,4-dicarboxylate + 3 O2 = pyrroloquinoline quinone + 2 H2O2 + 2 H2O + H(+). The protein operates within cofactor biosynthesis; pyrroloquinoline quinone biosynthesis. In terms of biological role, ring cyclization and eight-electron oxidation of 3a-(2-amino-2-carboxyethyl)-4,5-dioxo-4,5,6,7,8,9-hexahydroquinoline-7,9-dicarboxylic-acid to PQQ. This Xanthomonas euvesicatoria pv. vesicatoria (strain 85-10) (Xanthomonas campestris pv. vesicatoria) protein is Pyrroloquinoline-quinone synthase.